Reading from the N-terminus, the 719-residue chain is MRVNALLPLSGLIGTALAACPFADPSALGRRAEGGEVDARQRLKEVEVDDNGQFMTTDFGGNIEEQFSLKAGGRGSTLLEDFIFRQKLQHFDHERIPERVVHARGAGAHGIFTSYGDWSNITAASFLGAKDKQTPVFVRFSTVAGSRGSADTARDVHGFATRFYTDEGNFDIVGNNIPVFFIQDAIRFPDLIHSVKPSPDNEVPQAATAHDSAWDFFSSQPSALHTLFWAMSGNGIPRSYRHMDGFGIHTFRLVTEDGKSKLVKWHWKTKQGKAALVWEEAQVLAGKNADFHRQDLWDAIESGNAPSWELAVQLIDEDKAQAYGFDLLDPTKFLPEEFAPLQVLGEMTLNRNPMNYFAETEQISFQPGHIVRGVDFTEDPLLQGRLYSYLDTQLNRHRGPNFEQLPINRPVSGVHNNHRDGQGQAWIHKNIHHYSPSYLNKGYPAQANQTVGRGFFTTPGRTASGVLNRELSATFDDHYTQPRLFFNSLTPVEQQFVINAIRFEASHVTNEQVKKNVLEQLNKISNDVAKRVAVALGLEAPQPDPTYYHNNVTRGVSIFNESLPTIATLRVGVLSTTKGGSLDKAKALKEQLEKDGLKVTVIAEYLASGVDQTYSAADATAFDAVVVAEGAERVFSGKGAMSPLFPAGRPSQILTDGYRWGKPVAAVGSAKKALQSIGVEEKEAGVYAGAQDEVIKGVEEGLKVFKFLERFAVDGDDEE.

The N-terminal stretch at 1–18 is a signal peptide; it reads MRVNALLPLSGLIGTALA. A propeptide spanning residues 19 to 30 is cleaved from the precursor; the sequence is ACPFADPSALGR. Catalysis depends on residues His102 and Asn175. Tyr389 lines the heme pocket.

The protein belongs to the catalase family. Heme serves as cofactor.

It carries out the reaction 2 H2O2 = O2 + 2 H2O. Occurs in almost all aerobically respiring organisms and serves to protect cells from the toxic effects of hydrogen peroxide. The sequence is that of Catalase-3 (cat-3) from Neurospora crassa (strain ATCC 24698 / 74-OR23-1A / CBS 708.71 / DSM 1257 / FGSC 987).